We begin with the raw amino-acid sequence, 320 residues long: Probable 5-dehydro-4-deoxyglucarate dehydratase (320 aa).

Belongs to the DapA family.

It catalyses the reaction 5-dehydro-4-deoxy-D-glucarate + H(+) = 2,5-dioxopentanoate + CO2 + H2O. It functions in the pathway carbohydrate acid metabolism; D-glucarate degradation; 2,5-dioxopentanoate from D-glucarate: step 2/2. The polypeptide is Probable 5-dehydro-4-deoxyglucarate dehydratase (Streptomyces griseus subsp. griseus (strain JCM 4626 / CBS 651.72 / NBRC 13350 / KCC S-0626 / ISP 5235)).